Consider the following 275-residue polypeptide: tRNA pseudouridine synthase A (275 aa).

Catalysis depends on Asp72, which acts as the Nucleophile. Tyr133 contributes to the substrate binding site.

It belongs to the tRNA pseudouridine synthase TruA family. As to quaternary structure, homodimer.

It carries out the reaction uridine(38/39/40) in tRNA = pseudouridine(38/39/40) in tRNA. Its function is as follows. Formation of pseudouridine at positions 38, 39 and 40 in the anticodon stem and loop of transfer RNAs. The polypeptide is tRNA pseudouridine synthase A (Gluconobacter oxydans (strain 621H) (Gluconobacter suboxydans)).